A 386-amino-acid polypeptide reads, in one-letter code: Protein-glutamate methylesterase/protein-glutamine glutaminase 3 (386 aa).

One can recognise a Response regulatory domain in the interval 4-121; that stretch reads KVLVVDDSGF…SRNPQKVKQL (118 aa). At Asp55 the chain carries 4-aspartylphosphate. Residues 132–194 show a composition bias toward low complexity; that stretch reads SNRRSSGFGS…SHAPAHPTTS (63 aa). The interval 132–197 is disordered; it reads SNRRSSGFGS…PAHPTTSGTA (66 aa). Residues 191–383 form the CheB-type methylesterase domain; sequence PTTSGTAKRK…LDDIGRHLVE (193 aa). Residues Ser210, His237, and Asp330 contribute to the active site.

This sequence belongs to the CheB family. Post-translationally, phosphorylated by CheA. Phosphorylation of the N-terminal regulatory domain activates the methylesterase activity.

The protein resides in the cytoplasm. It carries out the reaction [protein]-L-glutamate 5-O-methyl ester + H2O = L-glutamyl-[protein] + methanol + H(+). It catalyses the reaction L-glutaminyl-[protein] + H2O = L-glutamyl-[protein] + NH4(+). Functionally, involved in chemotaxis. Part of a chemotaxis signal transduction system that modulates chemotaxis in response to various stimuli. Catalyzes the demethylation of specific methylglutamate residues introduced into the chemoreceptors (methyl-accepting chemotaxis proteins or MCP) by CheR. Also mediates the irreversible deamidation of specific glutamine residues to glutamic acid. The sequence is that of Protein-glutamate methylesterase/protein-glutamine glutaminase 3 from Pseudomonas syringae pv. syringae (strain B728a).